The chain runs to 82 residues: Sec-independent protein translocase protein TatA (82 aa).

Residues 2–22 (GFGGISLWQLLIVLAIIVLLF) traverse the membrane as a helical segment. The interval 43 to 82 (KAMSDEKNTDKEKPEQIQKSEESAPLDSAHTEKNKDNNKV) is disordered. Composition is skewed to basic and acidic residues over residues 44–64 (AMSD…KSEE) and 71–82 (AHTEKNKDNNKV).

It belongs to the TatA/E family. The Tat system comprises two distinct complexes: a TatABC complex, containing multiple copies of TatA, TatB and TatC subunits, and a separate TatA complex, containing only TatA subunits. Substrates initially bind to the TatABC complex, which probably triggers association of the separate TatA complex to form the active translocon.

It is found in the cell inner membrane. In terms of biological role, part of the twin-arginine translocation (Tat) system that transports large folded proteins containing a characteristic twin-arginine motif in their signal peptide across membranes. TatA could form the protein-conducting channel of the Tat system. The sequence is that of Sec-independent protein translocase protein TatA from Pseudoalteromonas translucida (strain TAC 125).